A 358-amino-acid chain; its full sequence is Period circadian protein (358 aa).

PAS domains are found at residues 1-120 and 138-240; these read GVVM…QTVP and FIMR…YIIE.

In terms of assembly, forms a heterodimer with timeless (TIM); the complex then translocates into the nucleus. In terms of processing, phosphorylated with a circadian rhythmicity.

The protein localises to the nucleus. Functionally, involved in the generation of biological rhythms. The biological cycle depends on the rhythmic formation and nuclear localization of the tim-per complex. Light induces the degradation of tim, which promotes elimination of per. Nuclear activity of the heterodimer coordinatively regulates per and tim transcription negative feedback loop. Behaves as a negative element in circadian transcriptional loop. Does not appear to bind DNA, suggesting indirect transcriptional inhibition. The sequence is that of Period circadian protein (per) from Hyalophora cecropia (Cecropia moth).